The primary structure comprises 210 residues: MRVSKANALKRWKGSQRRIGITGGIASGKTSIGKYIESVKNTPILDADMFSREALTANQTIKDTIINRYGRTIVDKENTNSKTINRAALGEIIFHDKNERIWLENLLHPIIEKRFEEELEKHKLSSTIVLIIPLLFEANFTYLCSEVWLIYCSLDEQYERLMKRDGLNKEQAKYRIEAQLPLESKKILSDHIIDNTNKLDLSYPQVEVLL.

The DPCK domain occupies 18 to 210 (RIGITGGIAS…LSYPQVEVLL (193 aa)). 26–31 (ASGKTS) lines the ATP pocket.

It belongs to the CoaE family.

The protein localises to the cytoplasm. It catalyses the reaction 3'-dephospho-CoA + ATP = ADP + CoA + H(+). It participates in cofactor biosynthesis; coenzyme A biosynthesis; CoA from (R)-pantothenate: step 5/5. Catalyzes the phosphorylation of the 3'-hydroxyl group of dephosphocoenzyme A to form coenzyme A. The chain is Dephospho-CoA kinase from Prochlorococcus marinus (strain SARG / CCMP1375 / SS120).